The chain runs to 536 residues: MQKHWWHKATVYQIYPKSFMDTNGDGIGDLKGITSKLDYLQKLGVMAIWLSPVYDSPMDDNGYDIANYEAITDIFGNMADMDNLLTQAKMRGIKIIMDLVVNHTSDEHAWFIEAREHPDSSERDYYIWCDQPNDLESIFGGSAWQYDDKSDQYYLHFFSKKQPDLNWENANLRQKIYDMMNFWIDKGIGGFRMDVIDMIGKIPAQHIVSNGPKLHAYLKEMNAASFGQHDLLTVGETWGATPEIAKQYSNPVNHELSMVFQFEHIGLQHKPEAPKWDYVKELNVPALKTIFNKWQTELELGQGWNSLFWNNHDLPRVLSIWGNTGKYREKSAKALAILLHLMRGTPYIYQGEEIGMTNYPFKDLNELDDIESLNYAKEAFTNGKSMETIMDSIRMIGRDNARTPMQWDASQNAGFSTADKTWLPVNPNYKDINVQAALKNSNSIFYTYQQLIQLRKENDWLVDADFELLPTADKVFAYLRKVREERYLIVVNVSDQEEVLEIDVDKQETLISNTNESAALANHKLQPWDAFCIKIN.

D194 functions as the Nucleophile in the catalytic mechanism. E236 functions as the Proton donor in the catalytic mechanism.

It belongs to the glycosyl hydrolase 13 family.

It localises to the cytoplasm. The enzyme catalyses Hydrolysis of (1-&gt;6)-alpha-D-glucosidic linkages in (1-&gt;6)-alpha-D-glucans and derived oligosaccharides.. The physiological substrates may be short isomaltosaccharides. The sequence is that of Glucan 1,6-alpha-glucosidase (dexB) from Streptococcus mutans serotype c (strain ATCC 700610 / UA159).